The following is a 274-amino-acid chain: Non-homologous end joining protein Ku (274 aa).

The 185-residue stretch at isoleucine 11 to serine 195 folds into the Ku domain.

Belongs to the prokaryotic Ku family. In terms of assembly, homodimer. Interacts with LigD.

Its function is as follows. With LigD forms a non-homologous end joining (NHEJ) DNA repair enzyme, which repairs dsDNA breaks with reduced fidelity. Binds linear dsDNA with 5'- and 3'- overhangs but not closed circular dsDNA nor ssDNA. Recruits and stimulates the ligase activity of LigD. The sequence is that of Non-homologous end joining protein Ku from Coxiella burnetii (strain RSA 331 / Henzerling II).